A 449-amino-acid chain; its full sequence is Chromosomal replication initiator protein DnaA (449 aa).

The tract at residues 1–73 is domain I, interacts with DnaA modulators; sequence MDADLKNLWD…ANSIKAVCSK (73 aa). Positions 73–110 are domain II; that stretch reads KLYTIEFIIMSEIYEKEEIKSSSNQKSKAIVVNDEMSS. The interval 111 to 327 is domain III, AAA+ region; the sequence is TLNPKYTFNS…GALIRIIAYS (217 aa). Positions 155, 157, 158, and 159 each coordinate ATP. The interval 328 to 449 is domain IV, binds dsDNA; that stretch reads SLTNREVTVD…NDITKKLTQN (122 aa).

This sequence belongs to the DnaA family. In terms of assembly, oligomerizes as a right-handed, spiral filament on DNA at oriC.

The protein resides in the cytoplasm. Its function is as follows. Plays an essential role in the initiation and regulation of chromosomal replication. ATP-DnaA binds to the origin of replication (oriC) to initiate formation of the DNA replication initiation complex once per cell cycle. Binds the DnaA box (a 9 base pair repeat at the origin) and separates the double-stranded (ds)DNA. Forms a right-handed helical filament on oriC DNA; dsDNA binds to the exterior of the filament while single-stranded (ss)DNA is stabiized in the filament's interior. The ATP-DnaA-oriC complex binds and stabilizes one strand of the AT-rich DNA unwinding element (DUE), permitting loading of DNA polymerase. After initiation quickly degrades to an ADP-DnaA complex that is not apt for DNA replication. Binds acidic phospholipids. The protein is Chromosomal replication initiator protein DnaA of Clostridium beijerinckii (strain ATCC 51743 / NCIMB 8052) (Clostridium acetobutylicum).